The sequence spans 1437 residues: Histone-lysine N-methyltransferase NSD3 (1437 aa).

2 disordered regions span residues 121–157 and 181–252; these read PHEILEKPSPPQPPPPPSVPQTVIPKKTGSPEIKLKI and QASE…PVQP. Over residues 128–139 the composition is skewed to pro residues; the sequence is PSPPQPPPPPSV. Residue Ser-150 is modified to Phosphoserine. The KIKL signature appears at 154–157; the sequence is KLKI. Residues 187–201 are compositionally biased toward basic residues; the sequence is KSKHESRKEKRKKSN. Residues 202 to 248 are compositionally biased toward basic and acidic residues; it reads KHDSSRSEERKSHKIPKLEPEEQNRPNERVDTVSEKPREEPVLKEEA. Glycyl lysine isopeptide (Lys-Gly) (interchain with G-Cter in SUMO2) cross-links involve residues Lys-218 and Lys-245. The 64-residue stretch at 270 to 333 folds into the PWWP 1 domain; sequence VGDLVWSKVG…EKRVREYKGH (64 aa). Disordered regions lie at residues 344-365 and 406-465; these read TKQASNHSEKQKIRKPRPQRER and AKKS…EPPP. Residue Lys-413 forms a Glycyl lysine isopeptide (Lys-Gly) (interchain with G-Cter in SUMO2) linkage. Positions 425-445 are enriched in polar residues; the sequence is VLNTQPEQTNAGEVASSLSST. Position 457 is a phosphoserine (Ser-457). Glycyl lysine isopeptide (Lys-Gly) (interchain with G-Cter in SUMO2) cross-links involve residues Lys-502 and Lys-532. The tract at residues 540–696 is disordered; that stretch reads QDRLIISTPN…DSSLSRRGTG (157 aa). Residues 546 to 571 are compositionally biased toward polar residues; it reads STPNQRNEKPTQSVSSPEATSGSTGS. The span at 583–595 shows a compositional bias: basic and acidic residues; the sequence is TRSESEKSTEVVP. Residues Ser-585, Ser-587, and Ser-590 each carry the phosphoserine modification. Lys-628 is covalently cross-linked (Glycyl lysine isopeptide (Lys-Gly) (interchain with G-Cter in SUMO2)). A Phosphoserine modification is found at Ser-655. Residues 682 to 692 are compositionally biased toward polar residues; that stretch reads DVQSMDSSLSR. PHD-type zinc fingers lie at residues 701–748, 749–805, and 862–955; these read DTVC…CKTG, QHPC…CSME, and VGFC…CKAG. Lys-790 is subject to N6-acetyllysine. The PWWP 2 domain maps to 960–1022; the sequence is YKQIVWVKLG…QGRVFPYVEG (63 aa). The stretch at 1033-1069 forms a coiled coil; the sequence is INKTFKKALEEAAKRFQELKAQRESKEALEIEKNSRK. Positions 1093 to 1143 constitute an AWS domain; the sequence is SEIPRCNCKPADENPCGLESECLNRMLQYECHPQVCPAGDRCQNQCFTKRL. An SET domain is found at 1145-1262; the sequence is PDAEIIKTER…AGMELTFNYN (118 aa). Residue Lys-1151 forms a Glycyl lysine isopeptide (Lys-Gly) (interchain with G-Cter in SUMO2) linkage. The Post-SET domain maps to 1269 to 1285; it reads GRTECHCGADNCSGFLG. A PHD-type 4; atypical zinc finger spans residues 1321–1368; the sequence is EDYCFQCGDGGELVMCDKKDCPKAYHLLCLNLTQPPYGKWECPWHQCD.

Belongs to the class V-like SAM-binding methyltransferase superfamily. Histone-lysine methyltransferase family. SET2 subfamily. As to quaternary structure, interacts with BRD4. Interacts (via KIKL motif) with BRD3 (via NET domain). In terms of tissue distribution, highly expressed in brain, heart and skeletal muscle. Expressed at lower level in liver and lung.

Its subcellular location is the nucleus. It is found in the chromosome. It carries out the reaction L-lysyl(4)-[histone H3] + 2 S-adenosyl-L-methionine = N(6),N(6)-dimethyl-L-lysyl(4)-[histone H3] + 2 S-adenosyl-L-homocysteine + 2 H(+). The catalysed reaction is L-lysyl(27)-[histone H3] + 2 S-adenosyl-L-methionine = N(6),N(6)-dimethyl-L-lysyl(27)-[histone H3] + 2 S-adenosyl-L-homocysteine + 2 H(+). Histone methyltransferase. Preferentially dimethylates 'Lys-4' and 'Lys-27' of histone H3 forming H3K4me2 and H3K27me2. H3 'Lys-4' methylation represents a specific tag for epigenetic transcriptional activation, while 'Lys-27' is a mark for transcriptional repression. This Homo sapiens (Human) protein is Histone-lysine N-methyltransferase NSD3.